The primary structure comprises 187 residues: Elongation factor P (187 aa).

The protein belongs to the elongation factor P family.

The protein resides in the cytoplasm. Its pathway is protein biosynthesis; polypeptide chain elongation. Involved in peptide bond synthesis. Stimulates efficient translation and peptide-bond synthesis on native or reconstituted 70S ribosomes in vitro. Probably functions indirectly by altering the affinity of the ribosome for aminoacyl-tRNA, thus increasing their reactivity as acceptors for peptidyl transferase. In Thermodesulfovibrio yellowstonii (strain ATCC 51303 / DSM 11347 / YP87), this protein is Elongation factor P.